A 359-amino-acid chain; its full sequence is MKPSIYSLTRDELIEWAVERGQKQFRATQIWDWLYKKRVQSFEEMTNISKDFVSILNDSFCVNPLKQRVVQESADGTVKYLFELPDGMLIETVLMRQHYGHSVCVTTQVGCNIGCTFCASGLIKKQRDLNSGEITAQIMLVQKYFDDRKQGERVSHVVVMGIGEPFDNYKNVMCFLRVINDDNGLAIGARHITVSTSGLAHKIRDFANEGVQVNLAVSLHAPNNDLRSSIMRVNRSFPLEKLFSAIEYYIEKTNRRVTFEYIMLNEVNDSIKQAQELADLTKTIRKLSYVNLIPYNPVSEHDQYSRSPKERVLAFYDVLKKNGVNCVVRQEHGTDIDAACGQLRSKTMKKDREKVTATK.

The Proton acceptor role is filled by glutamate 91. Residues 97–329 (QHYGHSVCVT…KKNGVNCVVR (233 aa)) form the Radical SAM core domain. A disulfide bond links cysteine 104 and cysteine 340. [4Fe-4S] cluster-binding residues include cysteine 111, cysteine 115, and cysteine 118. S-adenosyl-L-methionine-binding positions include 163–164 (GE), serine 195, 218–220 (SLH), and asparagine 296. Cysteine 340 acts as the S-methylcysteine intermediate in catalysis.

The protein belongs to the radical SAM superfamily. RlmN family. [4Fe-4S] cluster is required as a cofactor.

It localises to the cytoplasm. The catalysed reaction is adenosine(2503) in 23S rRNA + 2 reduced [2Fe-2S]-[ferredoxin] + 2 S-adenosyl-L-methionine = 2-methyladenosine(2503) in 23S rRNA + 5'-deoxyadenosine + L-methionine + 2 oxidized [2Fe-2S]-[ferredoxin] + S-adenosyl-L-homocysteine. It carries out the reaction adenosine(37) in tRNA + 2 reduced [2Fe-2S]-[ferredoxin] + 2 S-adenosyl-L-methionine = 2-methyladenosine(37) in tRNA + 5'-deoxyadenosine + L-methionine + 2 oxidized [2Fe-2S]-[ferredoxin] + S-adenosyl-L-homocysteine. Specifically methylates position 2 of adenine 2503 in 23S rRNA and position 2 of adenine 37 in tRNAs. This is Probable dual-specificity RNA methyltransferase RlmN from Streptococcus pyogenes serotype M2 (strain MGAS10270).